The chain runs to 207 residues: Small ribosomal subunit protein uS4 (207 aa).

The interval 31-56 is disordered; sequence KCKLDSKPGQHGRTSGARTSDYGNQL. The segment covering 42–53 has biased composition (polar residues); that stretch reads GRTSGARTSDYG. The 61-residue stretch at 97-157 folds into the S4 RNA-binding domain; the sequence is TRLDNVVYRM…EKSKKQVRIV (61 aa).

It belongs to the universal ribosomal protein uS4 family. In terms of assembly, part of the 30S ribosomal subunit. Contacts protein S5. The interaction surface between S4 and S5 is involved in control of translational fidelity.

Functionally, one of the primary rRNA binding proteins, it binds directly to 16S rRNA where it nucleates assembly of the body of the 30S subunit. With S5 and S12 plays an important role in translational accuracy. The sequence is that of Small ribosomal subunit protein uS4 from Herminiimonas arsenicoxydans.